Reading from the N-terminus, the 80-residue chain is MAERSQNLQDLFLNTVRKQKISLTIFLINGVKLTGVVTSFDNFCVLLRRDGHSQLVYKHAISTIMPGQPLQMFENEEAAS.

The Sm domain maps to 10–70; sequence DLFLNTVRKQ…ISTIMPGQPL (61 aa).

It belongs to the Hfq family. In terms of assembly, homohexamer.

Its function is as follows. RNA chaperone that binds small regulatory RNA (sRNAs) and mRNAs to facilitate mRNA translational regulation in response to envelope stress, environmental stress and changes in metabolite concentrations. Also binds with high specificity to tRNAs. The protein is RNA-binding protein Hfq of Rhizobium meliloti (strain 1021) (Ensifer meliloti).